Reading from the N-terminus, the 98-residue chain is Large ribosomal subunit protein uL23 (98 aa).

The protein belongs to the universal ribosomal protein uL23 family. In terms of assembly, part of the 50S ribosomal subunit. Contacts protein L29, and trigger factor when it is bound to the ribosome.

In terms of biological role, one of the early assembly proteins it binds 23S rRNA. One of the proteins that surrounds the polypeptide exit tunnel on the outside of the ribosome. Forms the main docking site for trigger factor binding to the ribosome. The protein is Large ribosomal subunit protein uL23 of Frankia casuarinae (strain DSM 45818 / CECT 9043 / HFP020203 / CcI3).